The sequence spans 286 residues: Energy-coupling factor transporter ATP-binding protein EcfA2 (286 aa).

The 244-residue stretch at Ile3–Gly246 folds into the ABC transporter domain. Gly40 to Ser47 contacts ATP.

It belongs to the ABC transporter superfamily. Energy-coupling factor EcfA family. Forms a stable energy-coupling factor (ECF) transporter complex composed of 2 membrane-embedded substrate-binding proteins (S component), 2 ATP-binding proteins (A component) and 2 transmembrane proteins (T component).

It localises to the cell membrane. Its function is as follows. ATP-binding (A) component of a common energy-coupling factor (ECF) ABC-transporter complex. Unlike classic ABC transporters this ECF transporter provides the energy necessary to transport a number of different substrates. This chain is Energy-coupling factor transporter ATP-binding protein EcfA2, found in Staphylococcus aureus (strain USA300).